A 212-amino-acid polypeptide reads, in one-letter code: Ion-translocating oxidoreductase complex subunit G (212 aa).

Residues 9-29 traverse the membrane as a helical segment; the sequence is GFLLALFALICTGLVAAVNQQ. Threonine 176 carries the FMN phosphoryl threonine modification.

The protein belongs to the RnfG family. The complex is composed of six subunits: RnfA, RnfB, RnfC, RnfD, RnfE and RnfG. FMN is required as a cofactor.

The protein resides in the cell inner membrane. Functionally, part of a membrane-bound complex that couples electron transfer with translocation of ions across the membrane. In Shewanella baltica (strain OS223), this protein is Ion-translocating oxidoreductase complex subunit G.